A 181-amino-acid polypeptide reads, in one-letter code: FMN reductase (NADH) RutF (181 aa).

It belongs to the non-flavoprotein flavin reductase family. RutF subfamily.

It catalyses the reaction FMNH2 + NAD(+) = FMN + NADH + 2 H(+). In terms of biological role, catalyzes the reduction of FMN to FMNH2 which is used to reduce pyrimidine by RutA via the Rut pathway. The protein is FMN reductase (NADH) RutF of Ancylobacter novellus (strain ATCC 8093 / DSM 506 / JCM 20403 / CCM 1077 / IAM 12100 / NBRC 12443 / NCIMB 10456) (Starkeya novella).